We begin with the raw amino-acid sequence, 132 residues long: L-ectoine synthase (132 aa).

This sequence belongs to the ectoine synthase family.

It catalyses the reaction (2S)-4-acetamido-2-aminobutanoate = L-ectoine + H2O. The protein operates within amine and polyamine biosynthesis; ectoine biosynthesis; L-ectoine from L-aspartate 4-semialdehyde: step 3/3. Catalyzes the circularization of gamma-N-acetyl-alpha,gamma-diaminobutyric acid (ADABA) to ectoine (1,4,5,6-tetrahydro-2-methyl-4-pyrimidine carboxylic acid), which is an excellent osmoprotectant. The sequence is that of L-ectoine synthase from Bordetella avium (strain 197N).